Reading from the N-terminus, the 415-residue chain is MTEKLQPLRGMKDLLPDDYKVHDYIINKARDVGVLYGYKQMSIPILEYTKVFNRSMGESSDVISKEIYSFLDKSNESVALRPEFTAGIIRSFISNGLQHKLPLKFFSTGPVFRYDRPQAGRQRQFHQLNYEYIGAKGAITDAETLKLAVDILKALEIEQDTILELNSLGCSESRSVYQQKLVEYLNDFKDQLSEESKIRLTKNPMRILDSKSEIDQKIIAAAPILSEYYTDESKEYFEELIKYLDILGVKYVINPRLVRGLDYYCHTAFEFTTKKLGSQSTILAGGRYDGLAKIMGNNDDVPAIGFAAGIERIALMREYNISEVKPVFVLPIGENNICYALEIVDKLRLQNISTIIDPVGKIAKRIQRVLNENAKFIIFIGDEEQANNSLKLKDLEKKEEYIVDFAKVLELLKKY.

Belongs to the class-II aminoacyl-tRNA synthetase family. In terms of assembly, homodimer.

Its subcellular location is the cytoplasm. The catalysed reaction is tRNA(His) + L-histidine + ATP = L-histidyl-tRNA(His) + AMP + diphosphate + H(+). The sequence is that of Histidine--tRNA ligase from Rickettsia felis (strain ATCC VR-1525 / URRWXCal2) (Rickettsia azadi).